Consider the following 386-residue polypeptide: Na(+)/H(+) antiporter NhaA (386 aa).

11 helical membrane passes run 11 to 31, 60 to 80, 96 to 116, 126 to 146, 155 to 175, 180 to 200, 218 to 238, 260 to 280, 293 to 313, 326 to 346, and 358 to 378; these read NDATGGVVLIVAAAFAMFLAN, LLLWINDALMALFFLMIGLEV, MFPLIAALGGMLAPGLIYAAF, GWAIPTATDIAFALGILALLG, MFLMALAVIDDLGAIVIIALF, LSLISLTVAAASIAVLAVLNG, VAVLKSGVHATLAGVIVGLFI, VSWLILPLFAFANAGISLSGV, ITLGLFIGKPLGITLICWLAV, LIDIAAVGVLCGIGFTMSIFI, and LVTLAKLGILSGSVISALVGY.

This sequence belongs to the NhaA Na(+)/H(+) (TC 2.A.33) antiporter family.

The protein resides in the cell inner membrane. The enzyme catalyses Na(+)(in) + 2 H(+)(out) = Na(+)(out) + 2 H(+)(in). In terms of biological role, na(+)/H(+) antiporter that extrudes sodium in exchange for external protons. The polypeptide is Na(+)/H(+) antiporter NhaA (Erwinia tasmaniensis (strain DSM 17950 / CFBP 7177 / CIP 109463 / NCPPB 4357 / Et1/99)).